We begin with the raw amino-acid sequence, 205 residues long: Mitochondrial ATP-independent inner membrane protease subunit 2 (205 aa).

Residues Glu-59 and Arg-104 contribute to the active site.

Belongs to the peptidase S26 family. IMP1 subfamily. Heterodimer of 2 subunits, IMP1A/B and IMP12.

It localises to the mitochondrion inner membrane. In terms of biological role, catalyzes the removal of transit peptides required for the targeting of proteins from the mitochondrial matrix, across the inner membrane, into the inter-membrane space. The chain is Mitochondrial ATP-independent inner membrane protease subunit 2 from Arabidopsis thaliana (Mouse-ear cress).